A 298-amino-acid polypeptide reads, in one-letter code: Probable aspartoacylase (298 aa).

Residues histidine 13 and glutamate 16 each coordinate Zn(2+). Residues arginine 54 and 61–62 contribute to the substrate site; that span reads NR. Histidine 103 lines the Zn(2+) pocket. Residues glutamate 161 and tyrosine 271 each coordinate substrate.

This sequence belongs to the AspA/AstE family. Aspartoacylase subfamily. The cofactor is Zn(2+).

It catalyses the reaction an N-acyl-L-aspartate + H2O = a carboxylate + L-aspartate. The protein is Probable aspartoacylase of Prochlorococcus marinus (strain MIT 9515).